A 703-amino-acid chain; its full sequence is Polyribonucleotide nucleotidyltransferase (703 aa).

Mg(2+)-binding residues include Asp-485 and Asp-491. One can recognise a KH domain in the interval 552–611 (PRAYTINIDTDKIRTLIGTGGKTINKIIEETGVKIDIREDGTVFVLSSDADSANRALKMI). An S1 motif domain is found at 621-689 (GEVYLGKVTK…NQGRVNLSRK (69 aa)).

Belongs to the polyribonucleotide nucleotidyltransferase family. Requires Mg(2+) as cofactor.

It is found in the cytoplasm. It catalyses the reaction RNA(n+1) + phosphate = RNA(n) + a ribonucleoside 5'-diphosphate. Functionally, involved in mRNA degradation. Catalyzes the phosphorolysis of single-stranded polyribonucleotides processively in the 3'- to 5'-direction. In Clostridium acetobutylicum (strain ATCC 824 / DSM 792 / JCM 1419 / IAM 19013 / LMG 5710 / NBRC 13948 / NRRL B-527 / VKM B-1787 / 2291 / W), this protein is Polyribonucleotide nucleotidyltransferase.